The primary structure comprises 321 residues: Non-canonical heme oxygenase HOZ, chloroplastic (321 aa).

The N-terminal 45 residues, 1–45 (MKSLVAHFSTPLITARLVPRCIIHRASISAVSFSTVRRRFSPLTM), are a transit peptide targeting the chloroplast. Positions 96–116 (CGMLSTFSQKYEGYPSGSMVD) are dimerization. Ser-130, Val-134, and His-135 together coordinate heme b. Dimerization stretches follow at residues 144 to 166 (KCSLLIARDPEDRTGLRITLHGD) and 205 to 208 (KVVR).

In terms of assembly, homodimer. Binds to heme in the interdimer interface; the heme iron is coordinated by a fixed water molecule.

It is found in the plastid. Its subcellular location is the chloroplast. In terms of biological role, dimeric beta-barrel protein binding to heme and catalyzing its degradation to produce biliverdin. May function in the tetrapyrrole biosynthetic pathway. The chain is Non-canonical heme oxygenase HOZ, chloroplastic from Arabidopsis thaliana (Mouse-ear cress).